Here is a 267-residue protein sequence, read N- to C-terminus: Phosphate import ATP-binding protein PstB (267 aa).

One can recognise an ABC transporter domain in the interval 12-251 (VSLDNVSIRY…EFDKTKNMFN (240 aa)). 44 to 51 (GPSGCGKS) contacts ATP.

The protein belongs to the ABC transporter superfamily. Phosphate importer (TC 3.A.1.7) family. As to quaternary structure, the complex is composed of two ATP-binding proteins (PstB), two transmembrane proteins (PstC and PstA) and a solute-binding protein (PstS).

Its subcellular location is the cell inner membrane. The catalysed reaction is phosphate(out) + ATP + H2O = ADP + 2 phosphate(in) + H(+). Functionally, part of the ABC transporter complex PstSACB involved in phosphate import. Responsible for energy coupling to the transport system. The protein is Phosphate import ATP-binding protein PstB of Prochlorococcus marinus (strain NATL2A).